We begin with the raw amino-acid sequence, 207 residues long: Protein GrpE (207 aa).

Composition is skewed to basic and acidic residues over residues 1 to 11 (MEENRDVKNEE) and 57 to 66 (DLVKNQEEEN). Positions 1-66 (MEENRDVKNE…DLVKNQEEEN (66 aa)) are disordered.

The protein belongs to the GrpE family. As to quaternary structure, homodimer.

The protein localises to the cytoplasm. Functionally, participates actively in the response to hyperosmotic and heat shock by preventing the aggregation of stress-denatured proteins, in association with DnaK and GrpE. It is the nucleotide exchange factor for DnaK and may function as a thermosensor. Unfolded proteins bind initially to DnaJ; upon interaction with the DnaJ-bound protein, DnaK hydrolyzes its bound ATP, resulting in the formation of a stable complex. GrpE releases ADP from DnaK; ATP binding to DnaK triggers the release of the substrate protein, thus completing the reaction cycle. Several rounds of ATP-dependent interactions between DnaJ, DnaK and GrpE are required for fully efficient folding. This chain is Protein GrpE, found in Clostridium beijerinckii (strain ATCC 51743 / NCIMB 8052) (Clostridium acetobutylicum).